We begin with the raw amino-acid sequence, 272 residues long: Catechol O-methyltransferase (272 aa).

At 1 to 6 (MLEAPP) the chain is on the cytoplasmic side. A helical; Signal-anchor for type II membrane protein transmembrane segment spans residues 7-27 (LLLVAGGVGLALLALRWLATT). At 28-272 (DLQFFGRAFI…YKGLSGPARP (245 aa)) the chain is on the extracellular side. S-adenosyl-L-methionine contacts are provided by residues Val-93, Glu-115, Ser-123, Glu-141, 168–171 (GASQ), Ser-170, and Asp-192. Asp-192 serves as a coordination point for Mg(2+). Residue Lys-195 coordinates substrate. Mg(2+)-binding residues include Asp-220 and Asn-221. Positions 221 and 250 each coordinate substrate. Position 267 is a phosphoserine (Ser-267).

This sequence belongs to the class I-like SAM-binding methyltransferase superfamily. Cation-dependent O-methyltransferase family. The cofactor is Mg(2+).

It is found in the cytoplasm. Its subcellular location is the cell membrane. It carries out the reaction a catechol + S-adenosyl-L-methionine = a guaiacol + S-adenosyl-L-homocysteine + H(+). The enzyme catalyses 2-hydroxyestrone + S-adenosyl-L-methionine = 2-hydroxy-3-methoxy-estrone + S-adenosyl-L-homocysteine + H(+). The catalysed reaction is 4-hydroxyestrone + S-adenosyl-L-methionine = 4-methoxyestrone + S-adenosyl-L-homocysteine + H(+). It catalyses the reaction 2-hydroxyestrone + S-adenosyl-L-methionine = 2-methoxyestrone + S-adenosyl-L-homocysteine + H(+). It carries out the reaction 4-hydroxy-17beta-estradiol + S-adenosyl-L-methionine = 4-methoxy-17beta-estradiol + S-adenosyl-L-homocysteine + H(+). The enzyme catalyses 2-hydroxy-17beta-estradiol + S-adenosyl-L-methionine = 2-hydroxy-3-methoxy-17beta-estradiol + S-adenosyl-L-homocysteine + H(+). The catalysed reaction is 2-hydroxy-17beta-estradiol + S-adenosyl-L-methionine = 2-methoxy-17beta-estradiol + S-adenosyl-L-homocysteine + H(+). Its function is as follows. Catalyzes the O-methylation, and thereby the inactivation, of catecholamine neurotransmitters and catechol hormones. Also shortens the biological half-lives of certain neuroactive drugs, like L-DOPA, alpha-methyl DOPA and isoproterenol. This Bos taurus (Bovine) protein is Catechol O-methyltransferase (COMT).